Here is a 402-residue protein sequence, read N- to C-terminus: MKAAYLDCFSGISGDMLLGALVDAGLDFNLLQRDLAGLDLDEYELYEQKVLKQGIRGTQIHVHALEGHVHRHLSDIQAIIGRSALPPQVKEKSLEIFTRLGKAEAKIHGTDIEQIHFHEVGAVDAIVDIVGAVIGFWRLGIEKVFASPIHVGKGFVKAAHGLLPVPAPATLELLTGVPIYAQDVEGELATPPGAAIVTAYCREFGPFPKIRVERVGYGAGVKDLTIPNLLRLTVGELADEDKGQEGIREGEALTLEVNIDDMNPECYDYLFEKLFQAGAMDVYIQTIQMKKNRPAVLLTVQTPYHKLEEMRRILFQETTTIGLRVYPIKKYMLPYELLTVETNYGSAKVKVAFMEGRACTVSPEYEDCRRLARLTGEPLKQIYEEIKEKAKILLYSTKYPMD.

Belongs to the LarC family.

The catalysed reaction is Ni(II)-pyridinium-3,5-bisthiocarboxylate mononucleotide = pyridinium-3,5-bisthiocarboxylate mononucleotide + Ni(2+). Its function is as follows. Involved in the biosynthesis of a nickel-pincer cofactor ((SCS)Ni(II) pincer complex). Binds Ni(2+), and functions in nickel delivery to pyridinium-3,5-bisthiocarboxylic acid mononucleotide (P2TMN), to form the mature cofactor. Is thus probably required for the activation of nickel-pincer cofactor-dependent enzymes. This is Pyridinium-3,5-bisthiocarboxylic acid mononucleotide nickel insertion protein from Desulfitobacterium hafniense (strain Y51).